The primary structure comprises 296 residues: Factor associated with metabolism and energy (296 aa).

Residue glycine 2 is the site of N-myristoyl glycine attachment. Composition is skewed to basic and acidic residues over residues 173 to 187 (SLHG…SPRD) and 267 to 281 (EQGK…LVRT). Disordered stretches follow at residues 173-204 (SLHG…DDHD) and 256-281 (LLWD…LVRT).

The protein resides in the cell membrane. It is found in the cytoplasmic vesicle. May be involved in tuning the metabolism, energy expenditure, and excretion processes. The chain is Factor associated with metabolism and energy from Homo sapiens (Human).